Consider the following 268-residue polypeptide: 4-pyridoxolactonase (268 aa).

H96, H98, D100, H101, H185, D207, and H252 together coordinate Zn(2+). D100 serves as the catalytic Proton donor/acceptor.

It belongs to the metallo-beta-lactamase superfamily. Homodimer. Requires Zn(2+) as cofactor.

It catalyses the reaction 4-pyridoxolactone + H2O = 4-pyridoxate + H(+). It functions in the pathway cofactor degradation; B6 vitamer degradation; 4-pyridoxate from pyridoxal: step 2/2. Its activity is regulated as follows. Inhibited by Hg(2+). Its function is as follows. Involved in the degradation of pyridoxine or pyridoxamine (free, phosphate-unbound, forms of vitamin B6). Hydrolyzes 4-pyridoxolactone to 4-pyridoxic acid. Has lower activity toward N-hexanoyl-D,L-homoserine lactone, but is not active toward 5-pyridoxolactone and gamma-butyrolactone. The polypeptide is 4-pyridoxolactonase (Mesorhizobium japonicum (strain LMG 29417 / CECT 9101 / MAFF 303099) (Mesorhizobium loti (strain MAFF 303099))).